A 218-amino-acid chain; its full sequence is Glutathione S-transferase class-mu 26 kDa isozyme 51 (218 aa).

Residues 2-83 form the GST N-terminal domain; the sequence is PAKLGYWKIR…YIADKHGMLG (82 aa). Glutathione is bound by residues 7-8, 41-45, 54-55, and 67-68; these read YW, WFGDK, NL, and QS. The 119-residue stretch at 85-203 folds into the GST C-terminal domain; the sequence is TPEERARISM…ESEKFIKWPL (119 aa). A substrate-binding site is contributed by tyrosine 111.

Belongs to the GST superfamily. Mu family. In terms of assembly, homodimer.

The protein localises to the cytoplasm. It catalyses the reaction RX + glutathione = an S-substituted glutathione + a halide anion + H(+). In terms of biological role, conjugation of reduced glutathione to a wide number of exogenous and endogenous hydrophobic electrophiles. GST isoenzymes appear to play a central role in the parasite detoxification system. Other functions are also suspected including a role in increasing the solubility of haematin in the parasite gut. The protein is Glutathione S-transferase class-mu 26 kDa isozyme 51 of Fasciola hepatica (Liver fluke).